A 287-amino-acid polypeptide reads, in one-letter code: NAD-dependent protein deacylase sir-2.2 (287 aa).

Residues 10–287 (AELCENSLKK…YKISDVLKEM (278 aa)) form the Deacetylase sirtuin-type domain. Residues 35-55 (GAGI…VGLY) and 116-119 (QNVD) contribute to the NAD(+) site. Residue His-134 is the Proton acceptor of the active site. Residues Cys-142, Cys-145, Cys-196, and Cys-199 each coordinate Zn(2+). Residues 236 to 238 (GTS), 262 to 264 (NIG), and Ile-280 contribute to the NAD(+) site.

The protein belongs to the sirtuin family. Class II subfamily. Interacts with pyc-1, pcca-1 and mccc-1. Zn(2+) serves as cofactor. As to expression, ubiquitously expressed with high expression in the pharynx, body wall muscles and gonad.

The protein resides in the mitochondrion matrix. It is found in the mitochondrion. The catalysed reaction is N(6)-acetyl-L-lysyl-[protein] + NAD(+) + H2O = 2''-O-acetyl-ADP-D-ribose + nicotinamide + L-lysyl-[protein]. In terms of biological role, NAD-dependent protein deacylase. Catalyzes the NAD-dependent hydrolysis of acyl groups from lysine residues. Plays a role in oxidative stress resistance. In Caenorhabditis elegans, this protein is NAD-dependent protein deacylase sir-2.2 (sir-2.2).